The sequence spans 489 residues: Probable serine protease EDA2 (489 aa).

Residues Met1 to Ala25 form the signal peptide. N-linked (GlcNAc...) asparagine glycosylation is found at Asn35, Asn51, and Asn162. Ser178 functions as the Charge relay system in the catalytic mechanism. N-linked (GlcNAc...) asparagine glycosylation is found at Asn253, Asn293, Asn365, and Asn406. Asp410 serves as the catalytic Charge relay system. An N-linked (GlcNAc...) asparagine glycan is attached at Asn419. The active-site Charge relay system is the His436. Residue Asn456 is glycosylated (N-linked (GlcNAc...) asparagine).

Belongs to the peptidase S28 family.

It localises to the secreted. May be involved in a proteolytic pathway controlling the nuclear division phase of megagametogenesis. This is Probable serine protease EDA2 (EDA2) from Arabidopsis thaliana (Mouse-ear cress).